Here is a 50-residue protein sequence, read N- to C-terminus: Sperm protamine P1 (50 aa).

The protein belongs to the protamine P1 family. Testis.

The protein resides in the nucleus. It localises to the chromosome. In terms of biological role, protamines substitute for histones in the chromatin of sperm during the haploid phase of spermatogenesis. They compact sperm DNA into a highly condensed, stable and inactive complex. The protein is Sperm protamine P1 (PRM1) of Trachypithecus vetulus (Purple-faced langur).